We begin with the raw amino-acid sequence, 72 residues long: Threonine dehydratase operon activator protein (72 aa).

Probable trans-acting positive activator for the tdc operon. The sequence is that of Threonine dehydratase operon activator protein (tdcR) from Escherichia coli (strain K12).